Consider the following 454-residue polypeptide: tRNA modification GTPase MnmE (454 aa).

Residues Arg23, Glu80, and Lys120 each contribute to the (6S)-5-formyl-5,6,7,8-tetrahydrofolate site. A TrmE-type G domain is found at 216–377 (GMKVVIAGRP…LRNHLKQSMG (162 aa)). Asn226 is a K(+) binding site. GTP is bound by residues 226–231 (NAGKSS), 245–251 (TDIAGTT), 270–273 (DTAG), 335–338 (NKAD), and 358–360 (SAR). A Mg(2+)-binding site is contributed by Ser230. The K(+) site is built by Thr245, Ile247, and Thr250. Position 251 (Thr251) interacts with Mg(2+). Lys454 provides a ligand contact to (6S)-5-formyl-5,6,7,8-tetrahydrofolate.

It belongs to the TRAFAC class TrmE-Era-EngA-EngB-Septin-like GTPase superfamily. TrmE GTPase family. Homodimer. Heterotetramer of two MnmE and two MnmG subunits. K(+) serves as cofactor.

It localises to the cytoplasm. In terms of biological role, exhibits a very high intrinsic GTPase hydrolysis rate. Involved in the addition of a carboxymethylaminomethyl (cmnm) group at the wobble position (U34) of certain tRNAs, forming tRNA-cmnm(5)s(2)U34. The polypeptide is tRNA modification GTPase MnmE (Escherichia coli O127:H6 (strain E2348/69 / EPEC)).